Here is a 450-residue protein sequence, read N- to C-terminus: Molybdate-anion transporter (450 aa).

Transmembrane regions (helical) follow at residues 1-21 (MLVTAYLSFVGLLASCLGLEL), 38-58 (FLQFQLDFYQVYFLALAADWL), 79-99 (ILYVCGLASTVLFGLVASSLV), 128-148 (FVLLVGRALGGLSTALLFSAF), 167-187 (IPATFARAAFWNHVLAVAAGV), 191-211 (AVASWIGLGPVAPFVAAIPLL), 249-269 (VLLLGVIQALFESVIFIFVFL), 278-298 (GAPLGIVFSSFMAASLLGSSL), 311-331 (PMHLLSLAVLIVVFSLFMLTF), 344-364 (FIAFLLIELACGLYFPSMSFL), 376-396 (GVLNWFRVPLHLLACLGLLVL), and 409-429 (FSICSAVMVTTLLAVAGLFTV).

The protein belongs to the major facilitator superfamily.

It is found in the cell membrane. Its function is as follows. Mediates high-affinity intracellular uptake of the rare oligo-element molybdenum. This Mus musculus (Mouse) protein is Molybdate-anion transporter (Mfsd5).